Here is a 153-residue protein sequence, read N- to C-terminus: Ribonuclease HI (153 aa).

The 141-residue stretch at 1–141 (MKSVNIFTDG…CDELAKLGAN (141 aa)) folds into the RNase H type-1 domain. Residues aspartate 9, glutamate 47, aspartate 69, and aspartate 133 each contribute to the Mg(2+) site.

The protein belongs to the RNase H family. As to quaternary structure, monomer. The cofactor is Mg(2+).

It localises to the cytoplasm. The enzyme catalyses Endonucleolytic cleavage to 5'-phosphomonoester.. Its function is as follows. Endonuclease that specifically degrades the RNA of RNA-DNA hybrids. This Haemophilus ducreyi (strain 35000HP / ATCC 700724) protein is Ribonuclease HI.